The primary structure comprises 444 residues: Acyl-CoA 6-desaturase (444 aa).

Residues 1–131 (MGKGGNQGEG…DMNLFKTNHV (131 aa)) are Cytoplasmic-facing. Positions 18–95 (MPTFSWEEIQ…LKPLLIGELA (78 aa)) constitute a Cytochrome b5 heme-binding domain. Residues 132-152 (FFLLLLAHIIALESIAWFTVF) form a helical membrane-spanning segment. Over 153 to 157 (YFGNG) the chain is Lumenal. Residues 158–178 (WIPTLITAFVLATSQAQAGWL) traverse the membrane as a helical segment. Topologically, residues 179–264 (QHDYGHLSVY…KYLPYNHQHE (86 aa)) are cytoplasmic. Positions 180 to 184 (HDYGH) match the Histidine box-1 motif. Positions 217–221 (HFQHH) match the Histidine box-2 motif. Residues 265-285 (YFFLIGPPLLIPMYFQYQIIM) traverse the membrane as a helical segment. Over 286–305 (TMIVHKNWVDLAWAISYYIR) the chain is Lumenal. Residues 306 to 326 (FFVTYIPFYGILGALLFLNFI) traverse the membrane as a helical segment. Over 327–444 (RFLESHWFVW…KLWLDAYLHK (118 aa)) the chain is Cytoplasmic. The Histidine box-3 signature appears at 382 to 386 (QIEHH).

It belongs to the fatty acid desaturase type 1 family.

It is found in the endoplasmic reticulum membrane. The enzyme catalyses (9Z,12Z)-octadecadienoyl-CoA + 2 Fe(II)-[cytochrome b5] + O2 + 2 H(+) = (6Z,9Z,12Z)-octadecatrienoyl-CoA + 2 Fe(III)-[cytochrome b5] + 2 H2O. It carries out the reaction (9Z,12Z,15Z)-octadecatrienoyl-CoA + 2 Fe(II)-[cytochrome b5] + O2 + 2 H(+) = (6Z,9Z,12Z,15Z)-octadecatetraenoyl-CoA + 2 Fe(III)-[cytochrome b5] + 2 H2O. The catalysed reaction is (9Z,12Z,15Z,18Z,21Z)-tetracosapentaenoyl-CoA + 2 Fe(II)-[cytochrome b5] + O2 + 2 H(+) = (6Z,9Z,12Z,15Z,18Z,21Z)-tetracosahexaenoyl-CoA + 2 Fe(III)-[cytochrome b5] + 2 H2O. It catalyses the reaction (11E)-octadecenoyl-CoA + 2 Fe(II)-[cytochrome b5] + O2 + 2 H(+) = (6Z,11E)-octadecadienoyl-CoA + 2 Fe(III)-[cytochrome b5] + 2 H2O. The enzyme catalyses (11Z,14Z)-eicosadienoyl-CoA + 2 Fe(II)-[cytochrome b5] + O2 + 2 H(+) = (8Z,11Z,14Z)-eicosatrienoyl-CoA + 2 Fe(III)-[cytochrome b5] + 2 H2O. It carries out the reaction (11Z,14Z,17Z)-eicosatrienoyl-CoA + 2 Fe(II)-[cytochrome b5] + O2 + 2 H(+) = (8Z,11Z,14Z,17Z)-eicosatetraenoyl-CoA + 2 Fe(III)-[cytochrome b5] + 2 H2O. Its pathway is lipid metabolism; polyunsaturated fatty acid biosynthesis. Its function is as follows. Involved in the biosynthesis of highly unsaturated fatty acids (HUFA) from the essential polyunsaturated fatty acids (PUFA) linoleic acid (LA) (18:2n-6) and alpha-linolenic acid (ALA) (18:3n-3) precursors, acting as a fatty acyl-coenzyme A (CoA) desaturase that introduces a cis double bond at carbon 6 of the fatty acyl chain. Catalyzes the first and rate limiting step in this pathway which is the desaturation of LA (18:2n-6) and ALA (18:3n-3) into gamma-linoleate (GLA) (18:3n-6) and stearidonate (18:4n-3), respectively. Subsequently, in the biosynthetic pathway of HUFA n-3 series, it desaturates tetracosapentaenoate (24:5n-3) to tetracosahexaenoate (24:6n-3), which is then converted to docosahexaenoate (DHA)(22:6n-3), an important lipid for nervous system function. It can also desaturate (11E)-octadecenoate (trans-vaccenoate) at carbon 6 generating (6Z,11E)-octadecadienoate. In addition to Delta-6 activity, this enzyme exhibits Delta-8 activity with slight biases toward n-3 fatty acyl-CoA substrates. This Macaca fascicularis (Crab-eating macaque) protein is Acyl-CoA 6-desaturase (FADS2).